The chain runs to 160 residues: Nucleotide-binding protein Smal_3487 (160 aa).

The protein belongs to the YajQ family.

Functionally, nucleotide-binding protein. In Stenotrophomonas maltophilia (strain R551-3), this protein is Nucleotide-binding protein Smal_3487.